We begin with the raw amino-acid sequence, 625 residues long: Chaperone protein HtpG (625 aa).

Positions 1–341 (MGKRKFKAES…SEDLSLNISR (341 aa)) are a; substrate-binding. The tract at residues 342 to 551 (EMLQHDRQLK…DGEISLEMEK (210 aa)) is b. A c region spans residues 552 to 625 (IINAMPDDQQ…FTNDICKVMV (74 aa)).

Belongs to the heat shock protein 90 family. In terms of assembly, homodimer.

It is found in the cytoplasm. Its function is as follows. Molecular chaperone. Has ATPase activity. The protein is Chaperone protein HtpG of Oceanobacillus iheyensis (strain DSM 14371 / CIP 107618 / JCM 11309 / KCTC 3954 / HTE831).